The following is a 309-amino-acid chain: Olfactory receptor 10J5 (309 aa).

Residues 1–27 (MQRNNFTEVIEFVFLGFSSFGKHQITL) lie on the Extracellular side of the membrane. Residues 28–48 (FVVFLTIYILTLAGNIIIVTI) traverse the membrane as a helical segment. The Cytoplasmic portion of the chain corresponds to 49–57 (THIDHHLHT). The helical transmembrane segment at 58–78 (PMYFFLSMLASSETVYTLVIV) threads the bilayer. Over 79–84 (PRMLSS) the chain is Extracellular. A helical transmembrane segment spans residues 85 to 105 (LIFYNLPISLAGCATQMFFFV). Cysteines 97 and 178 form a disulfide. Topologically, residues 106–131 (TLATNNCFLLTAMGYDRYVAICNPLR) are cytoplasmic. A helical transmembrane segment spans residues 132–152 (YTIIMSKGMCALLVCGSLGTG). Over 153–203 (LVMAVLHVPAMFHLPFCGTVVEHFFCDIYPVMKLSCVDTTVNEIINYGVSS) the chain is Extracellular. The chain crosses the membrane as a helical span at residues 204–224 (FVILVPIGLIFISYVLIVSSI). Topologically, residues 225–235 (LKIVSTEGQKK) are cytoplasmic. Residues 236–256 (AFATCASHLTVVIVHYGCASI) traverse the membrane as a helical segment. Topologically, residues 257–270 (AYLKPKSESSVEKD) are extracellular. Residues 271-291 (LLLSVTYTIITPLLNPVVYSL) traverse the membrane as a helical segment. Residues 292-309 (RNKEVKDALCRAVGRNTS) lie on the Cytoplasmic side of the membrane.

The protein belongs to the G-protein coupled receptor 1 family. Expressed in the olfactory epithelium as well as in the testis. Expressed in round spermatids during stages VI-VIII of spermatogenesis.

The protein localises to the cell membrane. Functionally, olfactory receptor. Activated by the synthetic floral odorant, lyral, and by alpha-cedrene, a sesquiterpene constituent of cedarwood oil. Its activation increases intracellular Ca(2+). Acts as a key regulator of myogenesis through its actions on cell migration and adhesion by activating the Ca(2+)-dependent AKT signal transduction pathway. Also acts as a regulator of angiogenesis. Moreover, plays a role in the regulation of lipid accumulation in hepatocytes via the cAMP-PKA pathway. Involved in sperm chemotaxis and motility. This is Olfactory receptor 10J5 from Mus musculus (Mouse).